The following is a 517-amino-acid chain: Protein translocase subunit SecD (517 aa).

The next 6 helical transmembrane spans lie at 5–25, 357–377, 380–400, 407–427, 455–475, and 479–499; these read LRWITILIVFVVSLFFMFPLD, IWAGIIGVAAVIIFMLIYYKF, FIASIALLSNAIIILGAMGMF, PGIAGLILTMGMAIDANVLIF, IIDSNITTLIAGLVLFQFGTG, and GFAVTLTIGILSSIFTAVTLS.

The protein belongs to the SecD/SecF family. SecD subfamily. In terms of assembly, forms a complex with SecF. Part of the essential Sec protein translocation apparatus which comprises SecA, SecYEG and auxiliary proteins SecDF. Other proteins may also be involved.

The protein resides in the cell inner membrane. Its function is as follows. Part of the Sec protein translocase complex. Interacts with the SecYEG preprotein conducting channel. SecDF uses the proton motive force (PMF) to complete protein translocation after the ATP-dependent function of SecA. The protein is Protein translocase subunit SecD of Calditerrivibrio nitroreducens (strain DSM 19672 / NBRC 101217 / Yu37-1).